Reading from the N-terminus, the 1391-residue chain is DNA-directed RNA polymerase subunit beta' (1391 aa).

4 residues coordinate Zn(2+): Cys72, Cys74, Cys87, and Cys90. Residues Asp462, Asp464, and Asp466 each coordinate Mg(2+). Zn(2+)-binding residues include Cys816, Cys890, Cys897, and Cys900.

The protein belongs to the RNA polymerase beta' chain family. As to quaternary structure, the RNAP catalytic core consists of 2 alpha, 1 beta, 1 beta' and 1 omega subunit. When a sigma factor is associated with the core the holoenzyme is formed, which can initiate transcription. It depends on Mg(2+) as a cofactor. Zn(2+) serves as cofactor.

The catalysed reaction is RNA(n) + a ribonucleoside 5'-triphosphate = RNA(n+1) + diphosphate. DNA-dependent RNA polymerase catalyzes the transcription of DNA into RNA using the four ribonucleoside triphosphates as substrates. The polypeptide is DNA-directed RNA polymerase subunit beta' (Neisseria meningitidis serogroup C (strain 053442)).